Here is a 376-residue protein sequence, read N- to C-terminus: Protein STRICTOSIDINE SYNTHASE-LIKE 8 (376 aa).

The signal sequence occupies residues 1–31; it reads MPISRRVLTPITAAPVILAVLCFFFWSSIIG. N-linked (GlcNAc...) asparagine glycosylation is found at asparagine 98, asparagine 172, and asparagine 224.

Belongs to the strictosidine synthase family.

It is found in the vacuole. This is Protein STRICTOSIDINE SYNTHASE-LIKE 8 from Arabidopsis thaliana (Mouse-ear cress).